Here is a 240-residue protein sequence, read N- to C-terminus: Uridylate kinase (240 aa).

12–15 (KISG) is an ATP binding site. Positions 20-25 (GNQGFG) are involved in allosteric activation by GTP. Residue Gly-54 coordinates UMP. ATP contacts are provided by Gly-55 and Arg-59. Residues Asp-74 and 135 to 142 (TGNPYFST) contribute to the UMP site. Residues Tyr-168 and Asp-171 each coordinate ATP.

It belongs to the UMP kinase family. In terms of assembly, homohexamer.

The protein localises to the cytoplasm. It catalyses the reaction UMP + ATP = UDP + ADP. It participates in pyrimidine metabolism; CTP biosynthesis via de novo pathway; UDP from UMP (UMPK route): step 1/1. Allosterically activated by GTP. Inhibited by UTP. In terms of biological role, catalyzes the reversible phosphorylation of UMP to UDP. The sequence is that of Uridylate kinase from Moorella thermoacetica (strain ATCC 39073 / JCM 9320).